The following is a 185-amino-acid chain: MLNEIKKDAQDRMDKCVEATKTQMAKVRTGRAHPSLLDSIKVPYYGSLTPLKQVGNVSIEDSRTLAISVFDSTMIPAVEKAIMSSDLGLNPMSAGATIRVPLPALTEERRKDLIKVVRAEAENGRIAVRNVRRDANSDVKALEKEKECTEDDVHRSEDEVQKFTDAHIKLIDEILAAKEAELMEV.

This sequence belongs to the RRF family.

The protein resides in the cytoplasm. Responsible for the release of ribosomes from messenger RNA at the termination of protein biosynthesis. May increase the efficiency of translation by recycling ribosomes from one round of translation to another. The protein is Ribosome-recycling factor of Shewanella woodyi (strain ATCC 51908 / MS32).